We begin with the raw amino-acid sequence, 83 residues long: Small ribosomal subunit protein bS18 (83 aa).

The disordered stretch occupies residues 1–23 (MKQRNNAKRVRLEQTRRPKKNPL).

It belongs to the bacterial ribosomal protein bS18 family. Part of the 30S ribosomal subunit. Forms a tight heterodimer with protein bS6.

Its function is as follows. Binds as a heterodimer with protein bS6 to the central domain of the 16S rRNA, where it helps stabilize the platform of the 30S subunit. In Corynebacterium efficiens (strain DSM 44549 / YS-314 / AJ 12310 / JCM 11189 / NBRC 100395), this protein is Small ribosomal subunit protein bS18.